The chain runs to 839 residues: Phosphatidylinositol-glycan-specific phospholipase D (839 aa).

The first 23 residues, 1–23 (MSAFRFWSGLLMLLGFLCPRSSP), serve as a signal peptide directing secretion. Residues Asn94, Asn271, Asn292, Asn307, and Asn321 are each glycosylated (N-linked (GlcNAc...) asparagine). FG-GAP repeat units follow at residues 365–427 (SSPA…GLPR), 434–496 (KEAH…GQLS), 498–558 (SPNV…YSSR), 562–622 (NVEA…SPGR), 632–692 (QSWF…GSTR), 703–769 (SLLS…TVGD), and 787–839 (QYVL…LGQD). 3 N-linked (GlcNAc...) asparagine glycosylation sites follow: Asn500, Asn590, and Asn658.

The protein belongs to the GPLD1 family. In terms of assembly, monomer. Post-translationally, glycosylated.

The protein localises to the secreted. It catalyses the reaction a 6-(alpha-D-glucosaminyl)-1-(1,2-diacyl-sn-glycero-3-phospho)-1D-myo-inositol + H2O = 6-(alpha-D-glucosaminyl)-1D-myo-inositol + a 1,2-diacyl-sn-glycero-3-phosphate + H(+). In terms of biological role, this protein hydrolyzes the inositol phosphate linkage in proteins anchored by phosphatidylinositol glycans (GPI-anchor) thus releasing these proteins from the membrane. The protein is Phosphatidylinositol-glycan-specific phospholipase D (GPLD1) of Bos taurus (Bovine).